The primary structure comprises 285 residues: N(G),N(G)-dimethylarginine dimethylaminohydrolase 1 (285 aa).

Ala2 is modified (N-acetylalanine). Substrate contacts are provided by residues Leu30, Asp73, 78 to 79 (ED), Arg98, and Arg145. The Proton donor role is filled by His173. The residue at position 222 (Cys222) is an S-nitrosocysteine. Val268 contacts substrate. The residue at position 274 (Cys274) is an S-nitrosocysteine. The active-site Nucleophile is Cys274. Cys274 provides a ligand contact to Zn(2+).

Belongs to the DDAH family. Monomer. In terms of tissue distribution, detected in brain, liver, kidney and pancreas, and at low levels in skeletal muscle.

The enzyme catalyses N(omega),N(omega)-dimethyl-L-arginine + H2O = dimethylamine + L-citrulline. It catalyses the reaction N(omega)-methyl-L-arginine + H2O = L-citrulline + methylamine. Its activity is regulated as follows. Inhibited by zinc ions. Enzyme purified in the absence of 1,10-phenanthroline contains on average 0.4 zinc atoms per subunit. Inhibited by 4-hydroxy-nonenal through the formation of a covalent adduct with His-173. Competitively inhibited by N(5)-iminopropyl-ornithine. Its function is as follows. Hydrolyzes N(G),N(G)-dimethyl-L-arginine (ADMA) and N(G)-monomethyl-L-arginine (MMA) which act as inhibitors of NOS. Has therefore a role in the regulation of nitric oxide generation. This chain is N(G),N(G)-dimethylarginine dimethylaminohydrolase 1, found in Homo sapiens (Human).